Reading from the N-terminus, the 505-residue chain is Folate transporter 1 (505 aa).

Transmembrane regions (helical) follow at residues S58–L78, L89–I109, Y122–T142, and L146–I166. Residues N177, N181, and N186 are each glycosylated (N-linked (GlcNAc...) asparagine). The next 2 membrane-spanning stretches (helical) occupy residues A192–I212 and H216–I236. N240 is a glycosylation site (N-linked (GlcNAc...) asparagine). 5 helical membrane passes run I266–I286, M300–T320, K326–I346, F352–A372, and F405–S425. An N-linked (GlcNAc...) asparagine glycan is attached at N427. The chain crosses the membrane as a helical span at residues L431–I451. N-linked (GlcNAc...) asparagine glycosylation is present at N454.

The protein belongs to the major facilitator superfamily. Folate-biopterin transporter (TC 2.A.71) family.

The protein localises to the cell membrane. It catalyses the reaction folate(in) + H(+)(in) = folate(out) + H(+)(out). With respect to regulation, transport of folates is inhibited by probenecid and methotrexate. Functionally, folate transporter with broad substrate specificity. Transports folic acid, folinic acid, pteroic acid, dihydropteroic acid, the folate precursor p-amino benzoic acid (pABA) and the human folate catabolite pABA monoglutamate. The protein is Folate transporter 1 of Plasmodium falciparum (isolate 3D7).